Here is a 284-residue protein sequence, read N- to C-terminus: NAD kinase (284 aa).

The active-site Proton acceptor is the Asp-70. NAD(+) is bound by residues 70 to 71 (DG), 139 to 140 (NE), Lys-167, Asp-169, Leu-177, 180 to 185 (TAYNLS), and Gln-236.

The protein belongs to the NAD kinase family. It depends on a divalent metal cation as a cofactor.

It is found in the cytoplasm. It carries out the reaction NAD(+) + ATP = ADP + NADP(+) + H(+). Functionally, involved in the regulation of the intracellular balance of NAD and NADP, and is a key enzyme in the biosynthesis of NADP. Catalyzes specifically the phosphorylation on 2'-hydroxyl of the adenosine moiety of NAD to yield NADP. This chain is NAD kinase, found in Helicobacter pylori (strain G27).